A 337-amino-acid polypeptide reads, in one-letter code: Major envelope glycoprotein (337 aa).

Residues Asn76, Asn114, Asn271, and Asn301 are each glycosylated (N-linked (GlcNAc...) asparagine; by host).

Belongs to the baculoviridae gp64 family. Post-translationally, palmitoylated.

The protein localises to the virion membrane. It is found in the host cell membrane. Envelope phosphoglycoprotein which mediates the fusion of viral and host endosomal membranes leading to virus entry into the host cell. In Lepidoptera (butterflies and moths), this protein is Major envelope glycoprotein (GP67).